Reading from the N-terminus, the 306-residue chain is Curved DNA-binding protein (306 aa).

The region spanning 5 to 69 is the J domain; it reads DYYAIMGVKP…QRRAEYDQMW (65 aa).

It localises to the cytoplasm. The protein localises to the nucleoid. Its function is as follows. DNA-binding protein that preferentially recognizes a curved DNA sequence. It is probably a functional analog of DnaJ; displays overlapping activities with DnaJ, but functions under different conditions, probably acting as a molecular chaperone in an adaptive response to environmental stresses other than heat shock. Lacks autonomous chaperone activity; binds native substrates and targets them for recognition by DnaK. Its activity is inhibited by the binding of CbpM. The sequence is that of Curved DNA-binding protein from Escherichia coli O17:K52:H18 (strain UMN026 / ExPEC).